Reading from the N-terminus, the 1714-residue chain is Collagen alpha-1(XXIV) chain (1714 aa).

Residues 1–35 (MHLRAHRTRRGKVSPTAKTKSLLHFIVLCVAGVVV) form the signal peptide. The Laminin G-like domain occupies 141–217 (KLVVHIRGKQ…MNNNSIHFEG (77 aa)). Asn-155, Asn-321, and Asn-376 each carry an N-linked (GlcNAc...) asparagine glycan. Collagen-like domains lie at 487-542 (LRGP…PGFS), 552-611 (GDQG…EGNP), 660-719 (GPAG…KGEQ), 741-797 (GPPG…RGPP), 798-857 (GPPG…TGPV), 858-887 (GLPG…QGEK), 888-947 (GVMG…KGEK), 948-1007 (GDQG…PGEM), 1011-1052 (GPPG…PGAP), 1053-1112 (GEEG…PGQR), 1116-1170 (GKKG…GIPG), 1172-1196 (RGHQ…PGED), 1201-1249 (GPPG…GEPG), 1252-1306 (GEQG…GNPG), 1309-1353 (GPPG…QGPK), 1354-1413 (GEQG…EGDA), and 1420-1479 (GPKG…PGPR). A disordered region spans residues 487-1481 (LRGPKGDTGP…PPGAPGPRKQ (995 aa)). Pro residues predominate over residues 496-505 (PPGPPGPAGI). Low complexity-rich tracts occupy residues 574-587 (HPGL…QGIP) and 685-701 (SVGP…PGPM). Pro residues predominate over residues 893-902 (PGPPGVPGPI). Positions 985–1019 (DRGLPGEPGLRGLQGDVGPPGEMGMEGPPGTEGES) are enriched in low complexity. Gly residues-rich tracts occupy residues 1035 to 1044 (GSVGGTGEPG) and 1065 to 1074 (GVPGGRGLPG). 2 stretches are compositionally biased toward low complexity: residues 1132 to 1145 (SRGP…SGPK) and 1174 to 1186 (HQGQ…LPGP). Residues 1256 to 1266 (LKGERGSEGNK) are compositionally biased toward basic and acidic residues. The span at 1271-1293 (APGPSGKPGIPGLQGLLGPKGIQ) shows a compositional bias: low complexity. Gly residues predominate over residues 1318–1327 (GIRGGPGRTG). Residues 1466 to 1476 (QPGPPGPPGAP) are compositionally biased toward pro residues. Residues 1515–1714 (EEIFKTLNYL…YIDSSSVCFL (200 aa)) form the Fibrillar collagen NC1 domain.

Belongs to the fibrillar collagen family.

The protein resides in the secreted. The protein localises to the extracellular space. Its subcellular location is the extracellular matrix. May participate in regulating type I collagen fibrillogenesis at specific anatomical locations during fetal development. This Homo sapiens (Human) protein is Collagen alpha-1(XXIV) chain (COL24A1).